A 301-amino-acid polypeptide reads, in one-letter code: Securin (301 aa).

Disordered stretches follow at residues 1–55, 82–120, and 218–284; these read MLPR…RTVL, DSPT…DTPL, and ASDQ…RSIH. The D-box 1 motif lies at 33-36; sequence RAPL. Residues 38–50 are compositionally biased toward polar residues; the sequence is STKQSNAPSSVTV. The D-box 2 signature appears at 52 to 55; that stretch reads RTVL. Polar residues-rich tracts occupy residues 88-98, 110-119, and 231-245; these read EPNSQGISRSA, PRRSSLTDTP, and VSKQ…STVY. 2 repeats span residues 250–260 and 270–280; these read ASGKSIPRPLS and ASGNSRRRPLS.

This sequence belongs to the securin family. Interacts with the caspase-like cut1, and prevents its protease activity probably by covering its active site. Ubiquitinated by the anaphase promoting complex (APC) at the onset of anaphase, conducting to its degradation.

It is found in the cytoplasm. The protein localises to the nucleus. Functionally, regulatory protein, which plays a central role in chromosome stability. Probably acts by blocking the action of key proteins. During the mitosis, it blocks separase/cut1 function, preventing the proteolysis of the cohesin complex and the subsequent segregation of the chromosomes. At the onset of anaphase, it is ubiquitinated, conducting to its destruction and to the liberation of cut1. The polypeptide is Securin (cut2) (Schizosaccharomyces pombe (strain 972 / ATCC 24843) (Fission yeast)).